Reading from the N-terminus, the 62-residue chain is Large ribosomal subunit protein bL28 (62 aa).

It belongs to the bacterial ribosomal protein bL28 family.

The polypeptide is Large ribosomal subunit protein bL28 (Streptococcus equi subsp. equi (strain 4047)).